The chain runs to 122 residues: Large ribosomal subunit protein uL14c (122 aa).

It belongs to the universal ribosomal protein uL14 family. Part of the 50S ribosomal subunit.

The protein resides in the plastid. Its subcellular location is the chloroplast. Its function is as follows. Binds to 23S rRNA. This Porphyra purpurea (Red seaweed) protein is Large ribosomal subunit protein uL14c.